Consider the following 137-residue polypeptide: ATP synthase epsilon chain 1 (137 aa).

It belongs to the ATPase epsilon chain family. In terms of assembly, F-type ATPases have 2 components, CF(1) - the catalytic core - and CF(0) - the membrane proton channel. CF(1) has five subunits: alpha(3), beta(3), gamma(1), delta(1), epsilon(1). CF(0) has three main subunits: a, b and c.

The protein resides in the cell inner membrane. In terms of biological role, produces ATP from ADP in the presence of a proton gradient across the membrane. This chain is ATP synthase epsilon chain 1 (atpC1), found in Ralstonia nicotianae (strain ATCC BAA-1114 / GMI1000) (Ralstonia solanacearum).